The sequence spans 225 residues: Ribosomal RNA small subunit methyltransferase G (225 aa).

Residues glycine 62, 113–114 (AE), and lysine 130 contribute to the S-adenosyl-L-methionine site.

Belongs to the methyltransferase superfamily. RNA methyltransferase RsmG family.

The protein localises to the cytoplasm. Its function is as follows. Specifically methylates the N7 position of a guanine in 16S rRNA. The protein is Ribosomal RNA small subunit methyltransferase G of Petrotoga mobilis (strain DSM 10674 / SJ95).